The sequence spans 332 residues: L-lactate dehydrogenase A chain (332 aa).

Residues 29-57 (GMVG…MEDK) and Arg99 each bind NAD(+). The substrate site is built by Arg106, Asn138, and Arg169. Residue Asn138 coordinates NAD(+). His193 serves as the catalytic Proton acceptor. Thr248 contributes to the substrate binding site.

The protein belongs to the LDH/MDH superfamily. LDH family. In terms of assembly, homotetramer.

It is found in the cytoplasm. It carries out the reaction (S)-lactate + NAD(+) = pyruvate + NADH + H(+). It participates in fermentation; pyruvate fermentation to lactate; (S)-lactate from pyruvate: step 1/1. Functionally, interconverts simultaneously and stereospecifically pyruvate and lactate with concomitant interconversion of NADH and NAD(+). The sequence is that of L-lactate dehydrogenase A chain (ldha) from Fundulus heteroclitus (Killifish).